Reading from the N-terminus, the 236-residue chain is Potassium/proton antiporter CemA (236 aa).

4 helical membrane passes run T12 to V32, I114 to G134, I161 to I181, and F196 to I216.

It belongs to the CemA family.

It is found in the plastid. It localises to the chloroplast inner membrane. It catalyses the reaction K(+)(in) + H(+)(out) = K(+)(out) + H(+)(in). In terms of biological role, contributes to K(+)/H(+) antiport activity by supporting proton efflux to control proton extrusion and homeostasis in chloroplasts in a light-dependent manner to modulate photosynthesis. Prevents excessive induction of non-photochemical quenching (NPQ) under continuous-light conditions. Indirectly promotes efficient inorganic carbon uptake into chloroplasts. This is Potassium/proton antiporter CemA from Chlorokybus atmophyticus (Soil alga).